Consider the following 591-residue polypeptide: DEAD-box ATP-dependent RNA helicase 17 (591 aa).

The Q motif signature appears at 23–52; sequence CSFTDLGLHPTLCAHLQDKMGFQAPTRIQA. Positions 55–248 constitute a Helicase ATP-binding domain; that stretch reads IPVAMSGQHM…KISLKNPVMI (194 aa). Residue 68-75 participates in ATP binding; sequence AATGTGKT. The DEAD box motif lies at 181-184; sequence DEAD. The 190-residue stretch at 293–482 folds into the Helicase C-terminal domain; that stretch reads QLVQRYVKVS…SFPVNGQRLH (190 aa). Positions 562-591 are disordered; sequence GRSHQVQLKKRKKEQKRERPAKRRKIPAKR. Over residues 568-591 the composition is skewed to basic residues; sequence QLKKRKKEQKRERPAKRRKIPAKR.

The protein belongs to the DEAD box helicase family. DDX31/DBP7 subfamily. As to expression, expressed in flowers and pollen grains.

It is found in the nucleus. The enzyme catalyses ATP + H2O = ADP + phosphate + H(+). Its function is as follows. May play a role in organellar ribosome biogenesis and suppress 16S rRNA maturation. In Oryza sativa subsp. japonica (Rice), this protein is DEAD-box ATP-dependent RNA helicase 17.